A 216-amino-acid polypeptide reads, in one-letter code: Cytochrome c biogenesis ATP-binding export protein CcmA (216 aa).

Positions 11-216 constitute an ABC transporter domain; that stretch reads LSANELTCIR…RKITLDYRFV (206 aa). 43 to 50 lines the ATP pocket; the sequence is GPNGAGKT.

The protein belongs to the ABC transporter superfamily. CcmA exporter (TC 3.A.1.107) family. As to quaternary structure, the complex is composed of two ATP-binding proteins (CcmA) and two transmembrane proteins (CcmB).

Its subcellular location is the cell inner membrane. It carries out the reaction heme b(in) + ATP + H2O = heme b(out) + ADP + phosphate + H(+). Its function is as follows. Part of the ABC transporter complex CcmAB involved in the biogenesis of c-type cytochromes; once thought to export heme, this seems not to be the case, but its exact role is uncertain. Responsible for energy coupling to the transport system. The sequence is that of Cytochrome c biogenesis ATP-binding export protein CcmA from Shewanella frigidimarina (strain NCIMB 400).